The primary structure comprises 508 residues: Photosystem II CP47 reaction center protein (508 aa).

6 consecutive transmembrane segments (helical) span residues 21–36 (AVHL…WAGS), 101–115 (IILS…IWHW), 140–156 (GIHL…FGAF), 203–218 (IAAG…FHLS), 237–252 (VLSS…AFVV), and 457–472 (NFAL…HGSR).

The protein belongs to the PsbB/PsbC family. PsbB subfamily. PSII is composed of 1 copy each of membrane proteins PsbA, PsbB, PsbC, PsbD, PsbE, PsbF, PsbH, PsbI, PsbJ, PsbK, PsbL, PsbM, PsbT, PsbX, PsbY, PsbZ, Psb30/Ycf12, at least 3 peripheral proteins of the oxygen-evolving complex and a large number of cofactors. It forms dimeric complexes. The cofactor is Binds multiple chlorophylls. PSII binds additional chlorophylls, carotenoids and specific lipids..

It localises to the plastid. Its subcellular location is the chloroplast thylakoid membrane. One of the components of the core complex of photosystem II (PSII). It binds chlorophyll and helps catalyze the primary light-induced photochemical processes of PSII. PSII is a light-driven water:plastoquinone oxidoreductase, using light energy to abstract electrons from H(2)O, generating O(2) and a proton gradient subsequently used for ATP formation. This Staurastrum punctulatum (Green alga) protein is Photosystem II CP47 reaction center protein.